We begin with the raw amino-acid sequence, 885 residues long: Cytosolic carboxypeptidase-like protein 5 (885 aa).

A Peptidase M14 domain is found at 150–576; it reads YPFSYAECQD…AVAVAALDMA (427 aa). His247 and Glu250 together coordinate Zn(2+). Disordered stretches follow at residues 341–364 and 392–428; these read SGSA…TERE and ESWE…QVPP. Positions 344-356 are enriched in polar residues; the sequence is ALKTSNQSNTSPP. The span at 393–408 shows a compositional bias: basic and acidic residues; the sequence is SWEKSGVQREAEHSDE. Positions 411 to 428 are enriched in polar residues; it reads SAQSRGETNSAPSEQVPP. Position 440 (His440) interacts with Zn(2+). Glu522 serves as the catalytic Proton donor/acceptor. Polar residues predominate over residues 606–668; sequence STGLTSNNRR…KSSPSFTFGT (63 aa). 2 disordered regions span residues 606 to 788 and 866 to 885; these read STGL…RTAL and ALLK…SLPT. Over residues 682–691 the composition is skewed to basic and acidic residues; sequence RECKAQEKRR. The span at 712-749 shows a compositional bias: low complexity; the sequence is LSAPVRAPLSPSSSSSSSSSSPSSSSSAPGPGSISLAG.

This sequence belongs to the peptidase M14 family. It depends on Zn(2+) as a cofactor.

Its subcellular location is the cytoplasm. The protein localises to the cytosol. The protein resides in the nucleus. It localises to the cytoskeleton. It is found in the spindle. Its subcellular location is the midbody. It catalyses the reaction gamma-L-glutamyl-L-glutamyl-[protein] + H2O = L-glutamyl-[protein] + L-glutamate. The enzyme catalyses (L-glutamyl)(n+1)-gamma-L-glutamyl-L-glutamyl-[protein] + H2O = (L-glutamyl)(n)-gamma-L-glutamyl-L-glutamyl-[protein] + L-glutamate. The catalysed reaction is C-terminal L-alpha-aminoacyl-L-glutamyl-[tubulin] + H2O = C-terminal L-alpha-aminoacyl-[tubulin] + L-glutamate. It carries out the reaction C-terminal L-alpha-aminoacyl-L-glutamyl-L-glutamyl-[tubulin] + H2O = C-terminal L-alpha-aminoacyl-L-glutamyl-[tubulin] + L-glutamate. Its function is as follows. Metallocarboxypeptidase that mediates deglutamylation of tubulin and non-tubulin target proteins. Catalyzes the removal of polyglutamate side chains present on the gamma-carboxyl group of glutamate residues within the C-terminal tail of alpha- and beta-tubulin. Cleaves alpha- and gamma-linked polyglutamate tubulin side-chain, as well as the branching point glutamate. Also catalyzes the removal of alpha-linked glutamate residues from the carboxy-terminus of alpha-tubulin. The protein is Cytosolic carboxypeptidase-like protein 5 (agbl5) of Danio rerio (Zebrafish).